Reading from the N-terminus, the 430-residue chain is MSIESWTAPVASTPVQANVTIPGSKSQTNRALMLAALAAAQGQGTSTIGGALRSRDTELMISALRTLGLHVDEAGSVLTVNGRITPGEDAQVDCGLAGTVLRFVPPLAALSANPVTFDGDEQARARPITPLLDALRGLGVPVDGVGLPFQVQGSGSVAGGTVAIDASASSQFVSGLLLCAASFTQGVTVQHTGSPVPSAPHIAMTVMMLRQAGVQVDDSVGNRWQVRPGTVAARHWVVEPDLTNAVAFLAAAAVSGGTVRITGWPKTSVQPADNILNILFRLNVVVNQTDSFLEVQGSTVYDGFDVDLRDVGELTPSVAALAALATPGSVSQLHGIAHLRGHETDRLAALSTEINRLGGDCQETSDGLIITATPLRPGVWRAYADHRMAMAGAIVGLRVSGVEVDDIGATHKTLPQFPQLWANMLKRSTG.

3-phosphoshikimate contacts are provided by K25, S26, and R30. K25 is a binding site for phosphoenolpyruvate. Phosphoenolpyruvate is bound by residues G98 and R126. Residues S169, S170, Q171, S198, E313, and H342 each contribute to the 3-phosphoshikimate site. Residue Q171 coordinates phosphoenolpyruvate. Residue E313 is the Proton acceptor of the active site. R346, R387, and K412 together coordinate phosphoenolpyruvate.

It belongs to the EPSP synthase family. As to quaternary structure, monomer.

Its subcellular location is the cytoplasm. The catalysed reaction is 3-phosphoshikimate + phosphoenolpyruvate = 5-O-(1-carboxyvinyl)-3-phosphoshikimate + phosphate. The protein operates within metabolic intermediate biosynthesis; chorismate biosynthesis; chorismate from D-erythrose 4-phosphate and phosphoenolpyruvate: step 6/7. Functionally, catalyzes the transfer of the enolpyruvyl moiety of phosphoenolpyruvate (PEP) to the 5-hydroxyl of shikimate-3-phosphate (S3P) to produce enolpyruvyl shikimate-3-phosphate and inorganic phosphate. The protein is 3-phosphoshikimate 1-carboxyvinyltransferase of Mycobacterium leprae (strain TN).